We begin with the raw amino-acid sequence, 481 residues long: Glucokinase-1 (481 aa).

In terms of domain architecture, Hexokinase spans 4–477 (PKLTKAVDSI…SGVGAALCAL (474 aa)). A hexokinase small subdomain region spans residues 64-204 (SGQEHGVTML…LSNVHVVALT (141 aa)). Lys-101 contacts ATP. Positions 146 to 172 (KMGFTFSYPVDQTSLSSGKLIRWTKGF) are glucose-binding. The interval 205-466 (NDTTGTLLAR…RDVHLRISKD (262 aa)) is hexokinase large subdomain. Residue 466–471 (DGSGVG) coordinates ATP.

This sequence belongs to the hexokinase family.

The catalysed reaction is D-glucose + ATP = D-glucose 6-phosphate + ADP + H(+). It catalyses the reaction a D-hexose + ATP = a D-hexose 6-phosphate + ADP + H(+). The enzyme catalyses D-mannose + ATP = D-mannose 6-phosphate + ADP + H(+). It functions in the pathway carbohydrate metabolism; hexose metabolism. The protein operates within carbohydrate degradation; glycolysis; D-glyceraldehyde 3-phosphate and glycerone phosphate from D-glucose: step 1/4. Its function is as follows. Glukokinase specific for aldohexoses. Phosphorylates glucose and mannose, but not fructose. The polypeptide is Glucokinase-1 (GLK1) (Kluyveromyces lactis (strain ATCC 8585 / CBS 2359 / DSM 70799 / NBRC 1267 / NRRL Y-1140 / WM37) (Yeast)).